The following is a 500-amino-acid chain: Cytochrome P450 71B38 (500 aa).

The chain crosses the membrane as a helical span at residues 3–23; it reads IFLCFLLLLPLSLILFKKLLP. Cys-441 contacts heme.

It belongs to the cytochrome P450 family. The cofactor is heme.

It is found in the membrane. This chain is Cytochrome P450 71B38 (CYP71B38), found in Arabidopsis thaliana (Mouse-ear cress).